The following is a 245-amino-acid chain: TPR repeat-containing protein PA4299 (245 aa).

A signal peptide spans 1–16 (MKALIGIGLCAALLGG). Cys17 carries N-palmitoyl cysteine lipidation. Cys17 carries S-diacylglycerol cysteine lipidation. 3 TPR repeats span residues 100-133 (PEAH…RPTE), 135-167 (RFRN…QQGG), and 169-200 (LPAT…DARD). The tract at residues 210–245 (SWGAVPTPGAAPASDDPLAELPAEANMHTAMANEAP) is disordered.

It is found in the cell membrane. In Pseudomonas aeruginosa (strain ATCC 15692 / DSM 22644 / CIP 104116 / JCM 14847 / LMG 12228 / 1C / PRS 101 / PAO1), this protein is TPR repeat-containing protein PA4299.